The primary structure comprises 102 residues: Protein PAPPAS (102 aa).

The next 2 membrane-spanning stretches (helical) occupy residues 13–33 and 82–102; these read LFLT…FVKW and IGSD…FFFF.

Expressed in placenta with lower expression in brain, kidney and testis.

It localises to the endoplasmic reticulum membrane. In Homo sapiens (Human), this protein is Protein PAPPAS (PAPPA-AS1).